Consider the following 258-residue polypeptide: Isoprenyl transferase (258 aa).

The active site involves Asp24. Residue Asp24 participates in Mg(2+) binding. Substrate-binding positions include 25 to 28 (GNGR), Trp29, Arg37, His41, and 69 to 71 (SSE). Asn72 serves as the catalytic Proton acceptor. Substrate contacts are provided by residues Trp73, Arg75, Arg190, and 196–198 (RIS). Glu209 contributes to the Mg(2+) binding site.

Belongs to the UPP synthase family. As to quaternary structure, homodimer. Mg(2+) is required as a cofactor.

Its function is as follows. Catalyzes the condensation of isopentenyl diphosphate (IPP) with allylic pyrophosphates generating different type of terpenoids. The protein is Isoprenyl transferase of Ralstonia nicotianae (strain ATCC BAA-1114 / GMI1000) (Ralstonia solanacearum).